The following is a 239-amino-acid chain: MARGCLCCLKYMMFLFNLIFWLCGCGLLGVGIWLSVSQGNFATFSPSFPSLSAANLVIAIGTIVMVTGFLGCLGAIKENKCLLLSFFIILLIILLAELILLILFFVYMDKVNENAKQDLKDGLLLYNTENNVGLKNAWNIIQAEMHCCGVTDYTDWYPVLGENTVPDRCCMENSQDCGHNSTSLVWKTGCYEKVKMWFDDNKHVLGTIGMCILIIQILGMAFSMTLFQQIHRTGKKYDA.

The Cytoplasmic portion of the chain corresponds to 1-13 (MARGCLCCLKYMM). Residues 14–34 (FLFNLIFWLCGCGLLGVGIWL) traverse the membrane as a helical segment. The Extracellular segment spans residues 35-55 (SVSQGNFATFSPSFPSLSAAN). The helical transmembrane segment at 56–76 (LVIAIGTIVMVTGFLGCLGAI) threads the bilayer. Residues 77-85 (KENKCLLLS) lie on the Cytoplasmic side of the membrane. The chain crosses the membrane as a helical span at residues 86-106 (FFIILLIILLAELILLILFFV). Over 107-203 (YMDKVNENAK…VKMWFDDNKH (97 aa)) the chain is Extracellular. N-linked (GlcNAc...) asparagine glycosylation is present at Asn180. Residues 204 to 224 (VLGTIGMCILIIQILGMAFSM) form a helical membrane-spanning segment. The Cytoplasmic portion of the chain corresponds to 225–239 (TLFQQIHRTGKKYDA).

The protein belongs to the tetraspanin (TM4SF) family.

Its subcellular location is the membrane. In Xenopus tropicalis (Western clawed frog), this protein is Tetraspanin-9 (tspan9).